The chain runs to 160 residues: Cytochrome b6-f complex subunit 4 (160 aa).

The next 3 helical transmembrane spans lie at 36–56 (LLYV…GLAI), 95–115 (LLGV…PFIE), and 131–151 (TVFL…TMPI).

Belongs to the cytochrome b family. PetD subfamily. The 4 large subunits of the cytochrome b6-f complex are cytochrome b6, subunit IV (17 kDa polypeptide, petD), cytochrome f and the Rieske protein, while the 4 small subunits are petG, petL, petM and petN. The complex functions as a dimer.

The protein localises to the plastid. It is found in the chloroplast thylakoid membrane. Functionally, component of the cytochrome b6-f complex, which mediates electron transfer between photosystem II (PSII) and photosystem I (PSI), cyclic electron flow around PSI, and state transitions. The polypeptide is Cytochrome b6-f complex subunit 4 (Pyropia yezoensis (Susabi-nori)).